Consider the following 666-residue polypeptide: DNA ligase (666 aa).

NAD(+) is bound by residues 34–38, 83–84, and Glu114; these read DAEYD and SL. The active-site N6-AMP-lysine intermediate is Lys116. NAD(+)-binding residues include Arg137, Glu171, Lys286, and Lys310. Positions 404, 407, 422, and 427 each coordinate Zn(2+). In terms of domain architecture, BRCT spans 588 to 666; the sequence is NTESTISEKS…EEFFAILKGE (79 aa).

The protein belongs to the NAD-dependent DNA ligase family. LigA subfamily. Mg(2+) is required as a cofactor. Mn(2+) serves as cofactor.

It catalyses the reaction NAD(+) + (deoxyribonucleotide)n-3'-hydroxyl + 5'-phospho-(deoxyribonucleotide)m = (deoxyribonucleotide)n+m + AMP + beta-nicotinamide D-nucleotide.. Functionally, DNA ligase that catalyzes the formation of phosphodiester linkages between 5'-phosphoryl and 3'-hydroxyl groups in double-stranded DNA using NAD as a coenzyme and as the energy source for the reaction. It is essential for DNA replication and repair of damaged DNA. The polypeptide is DNA ligase (Mesoplasma florum (strain ATCC 33453 / NBRC 100688 / NCTC 11704 / L1) (Acholeplasma florum)).